Here is a 295-residue protein sequence, read N- to C-terminus: Phosphatidylserine decarboxylase proenzyme (295 aa).

Catalysis depends on charge relay system; for autoendoproteolytic cleavage activity residues Asp113, His169, and Ser256. The active-site Schiff-base intermediate with substrate; via pyruvic acid; for decarboxylase activity is the Ser256. Pyruvic acid (Ser); by autocatalysis is present on Ser256.

This sequence belongs to the phosphatidylserine decarboxylase family. PSD-B subfamily. Prokaryotic type II sub-subfamily. As to quaternary structure, heterodimer of a large membrane-associated beta subunit and a small pyruvoyl-containing alpha subunit. Pyruvate serves as cofactor. Post-translationally, is synthesized initially as an inactive proenzyme. Formation of the active enzyme involves a self-maturation process in which the active site pyruvoyl group is generated from an internal serine residue via an autocatalytic post-translational modification. Two non-identical subunits are generated from the proenzyme in this reaction, and the pyruvate is formed at the N-terminus of the alpha chain, which is derived from the carboxyl end of the proenzyme. The autoendoproteolytic cleavage occurs by a canonical serine protease mechanism, in which the side chain hydroxyl group of the serine supplies its oxygen atom to form the C-terminus of the beta chain, while the remainder of the serine residue undergoes an oxidative deamination to produce ammonia and the pyruvoyl prosthetic group on the alpha chain. During this reaction, the Ser that is part of the protease active site of the proenzyme becomes the pyruvoyl prosthetic group, which constitutes an essential element of the active site of the mature decarboxylase.

It localises to the cell membrane. It catalyses the reaction a 1,2-diacyl-sn-glycero-3-phospho-L-serine + H(+) = a 1,2-diacyl-sn-glycero-3-phosphoethanolamine + CO2. It participates in phospholipid metabolism; phosphatidylethanolamine biosynthesis; phosphatidylethanolamine from CDP-diacylglycerol: step 2/2. Catalyzes the formation of phosphatidylethanolamine (PtdEtn) from phosphatidylserine (PtdSer). The chain is Phosphatidylserine decarboxylase proenzyme from Clostridium botulinum (strain ATCC 19397 / Type A).